An 870-amino-acid chain; its full sequence is Serine protease DegP homolog (870 aa).

Positions 1-29 are cleaved as a signal peptide; it reads MDIIFCTPTYCKIMLMIIMLISLRTRCDT. The segment at 128–151 is disordered; the sequence is KNPLNDNFKNPKLRKHSPNNKKNK. Residues 138–151 show a composition bias toward basic residues; the sequence is PKLRKHSPNNKKNK. Active-site charge relay system residues include His328, Asp359, and Ser437.

This sequence belongs to the peptidase S1C family. Oligomer; may form trimers or hexamers. Forms a complex at least composed of DegP, ENO and HSP70.

It localises to the cytoplasm. The protein localises to the parasitophorous vacuole. Its subcellular location is the host cell membrane. The protein resides in the host cytoplasm. Serine protease which also acts as a protein chaperone. Plays a role in the parasite development in host erythrocytes possibly by protecting it against thermal and oxidative stresses. The protein is Serine protease DegP homolog of Plasmodium falciparum (isolate 3D7).